We begin with the raw amino-acid sequence, 510 residues long: 2,3-bisphosphoglycerate-independent phosphoglycerate mutase (510 aa).

Asp-12 and Ser-62 together coordinate Mn(2+). Ser-62 (phosphoserine intermediate) is an active-site residue. Residues His-123, 152–153 (RD), Arg-184, Arg-190, 257–260 (RADR), and Lys-331 contribute to the substrate site. Mn(2+)-binding residues include Asp-399, His-403, Asp-440, His-441, and His-458.

This sequence belongs to the BPG-independent phosphoglycerate mutase family. As to quaternary structure, monomer. Mn(2+) serves as cofactor.

It carries out the reaction (2R)-2-phosphoglycerate = (2R)-3-phosphoglycerate. It participates in carbohydrate degradation; glycolysis; pyruvate from D-glyceraldehyde 3-phosphate: step 3/5. In terms of biological role, catalyzes the interconversion of 2-phosphoglycerate and 3-phosphoglycerate. The protein is 2,3-bisphosphoglycerate-independent phosphoglycerate mutase of Lawsonia intracellularis (strain PHE/MN1-00).